We begin with the raw amino-acid sequence, 400 residues long: tRNA (guanine-N(7)-)-methyltransferase (400 aa).

S-adenosyl-L-methionine-binding residues include glutamate 124, glutamate 149, and aspartate 176. Aspartate 232 contributes to the substrate binding site.

The protein belongs to the class I-like SAM-binding methyltransferase superfamily. TrmB family.

The catalysed reaction is guanosine(46) in tRNA + S-adenosyl-L-methionine = N(7)-methylguanosine(46) in tRNA + S-adenosyl-L-homocysteine. Its pathway is tRNA modification; N(7)-methylguanine-tRNA biosynthesis. Its function is as follows. Catalyzes the formation of N(7)-methylguanine at position 46 (m7G46) in tRNA. The protein is tRNA (guanine-N(7)-)-methyltransferase of Helicobacter pylori (strain J99 / ATCC 700824) (Campylobacter pylori J99).